The primary structure comprises 146 residues: Hemoglobin subunit beta (146 aa).

Valine 1 is subject to N-acetylvaline. Positions 2 to 146 constitute a Globin domain; it reads HLTAEEKSLV…VANALAHKYH (145 aa). Threonine 12 carries the post-translational modification Phosphothreonine. Residue serine 44 is modified to Phosphoserine. Lysine 59 carries the post-translational modification N6-acetyllysine. Position 63 (histidine 63) interacts with heme b. Lysine 82 bears the N6-acetyllysine mark. A heme b-binding site is contributed by histidine 92. An S-nitrosocysteine modification is found at cysteine 93. Position 144 is an N6-acetyllysine (lysine 144).

Belongs to the globin family. Heterotetramer of two alpha chains and two beta chains. In terms of tissue distribution, red blood cells.

Functionally, involved in oxygen transport from the lung to the various peripheral tissues. This chain is Hemoglobin subunit beta (HBB), found in Vulpes vulpes (Red fox).